The chain runs to 141 residues: Nucleoside diphosphate kinase (141 aa).

6 residues coordinate ATP: Lys-11, Phe-59, Arg-87, Thr-93, Arg-104, and Asn-114. His-117 functions as the Pros-phosphohistidine intermediate in the catalytic mechanism.

This sequence belongs to the NDK family. Homotetramer. Mg(2+) is required as a cofactor.

Its subcellular location is the cytoplasm. It catalyses the reaction a 2'-deoxyribonucleoside 5'-diphosphate + ATP = a 2'-deoxyribonucleoside 5'-triphosphate + ADP. It carries out the reaction a ribonucleoside 5'-diphosphate + ATP = a ribonucleoside 5'-triphosphate + ADP. Functionally, major role in the synthesis of nucleoside triphosphates other than ATP. The ATP gamma phosphate is transferred to the NDP beta phosphate via a ping-pong mechanism, using a phosphorylated active-site intermediate. This Chromobacterium violaceum (strain ATCC 12472 / DSM 30191 / JCM 1249 / CCUG 213 / NBRC 12614 / NCIMB 9131 / NCTC 9757 / MK) protein is Nucleoside diphosphate kinase.